An 81-amino-acid polypeptide reads, in one-letter code: D-alanyl carrier protein (81 aa).

Residues 1 to 81 form the Carrier domain; it reads MADEAIKNGV…KIIAKVEQAQ (81 aa). Serine 39 carries the post-translational modification O-(pantetheine 4'-phosphoryl)serine.

Belongs to the DltC family. 4'-phosphopantetheine is transferred from CoA to a specific serine of apo-DCP.

The protein resides in the cytoplasm. It functions in the pathway cell wall biogenesis; lipoteichoic acid biosynthesis. Its function is as follows. Carrier protein involved in the D-alanylation of lipoteichoic acid (LTA). The loading of thioester-linked D-alanine onto DltC is catalyzed by D-alanine--D-alanyl carrier protein ligase DltA. The DltC-carried D-alanyl group is further transferred to cell membrane phosphatidylglycerol (PG) by forming an ester bond, probably catalyzed by DltD. D-alanylation of LTA plays an important role in modulating the properties of the cell wall in Gram-positive bacteria, influencing the net charge of the cell wall. This Lacticaseibacillus casei (strain BL23) (Lactobacillus casei) protein is D-alanyl carrier protein.